The following is a 541-amino-acid chain: NAD(P)H-quinone oxidoreductase subunit 2 A, chloroplastic (541 aa).

Transmembrane regions (helical) follow at residues Leu24–Leu44, Ile57–Phe77, Ile99–Ile119, Met124–Cys144, Phe149–Tyr169, Tyr183–Gly203, Pro227–Ala247, Ile289–Ala309, Trp326–Ile346, Met354–Asp374, Tyr385–Leu405, Ala426–Phe446, Leu449–Leu469, and Met515–Ile535.

This sequence belongs to the complex I subunit 2 family. As to quaternary structure, NDH is composed of at least 16 different subunits, 5 of which are encoded in the nucleus.

Its subcellular location is the plastid. It is found in the chloroplast thylakoid membrane. It carries out the reaction a plastoquinone + NADH + (n+1) H(+)(in) = a plastoquinol + NAD(+) + n H(+)(out). It catalyses the reaction a plastoquinone + NADPH + (n+1) H(+)(in) = a plastoquinol + NADP(+) + n H(+)(out). Functionally, NDH shuttles electrons from NAD(P)H:plastoquinone, via FMN and iron-sulfur (Fe-S) centers, to quinones in the photosynthetic chain and possibly in a chloroplast respiratory chain. The immediate electron acceptor for the enzyme in this species is believed to be plastoquinone. Couples the redox reaction to proton translocation, and thus conserves the redox energy in a proton gradient. In Coffea arabica (Arabian coffee), this protein is NAD(P)H-quinone oxidoreductase subunit 2 A, chloroplastic.